The sequence spans 346 residues: Acetylserotonin O-methyltransferase (346 aa).

Residues Tyr-148, Trp-165, Asp-211, 236 to 238 (GDF), and Lys-253 contribute to the S-adenosyl-L-methionine site. Residue His-256 is the Proton donor/acceptor of the active site. Residues Asp-257, Asn-303, and Gln-307 each coordinate substrate.

The protein belongs to the class I-like SAM-binding methyltransferase superfamily. Cation-independent O-methyltransferase family. Homodimer. In terms of tissue distribution, expressed in pineal gland and retina.

It catalyses the reaction N-acetylserotonin + S-adenosyl-L-methionine = melatonin + S-adenosyl-L-homocysteine + H(+). It participates in aromatic compound metabolism; melatonin biosynthesis; melatonin from serotonin: step 1/2. Its function is as follows. Catalyzes the transfer of a methyl group onto N-acetylserotonin, producing melatonin (N-acetyl-5-methoxytryptamine). The chain is Acetylserotonin O-methyltransferase (ASMT) from Gallus gallus (Chicken).